The chain runs to 223 residues: Ribose-5-phosphate isomerase A (223 aa).

Residues threonine 32 to threonine 35, aspartate 85 to aspartate 88, and lysine 98 to glycine 101 each bind substrate. The active-site Proton acceptor is the glutamate 107. Position 125 (lysine 125) interacts with substrate.

The protein belongs to the ribose 5-phosphate isomerase family. In terms of assembly, homodimer.

It catalyses the reaction aldehydo-D-ribose 5-phosphate = D-ribulose 5-phosphate. The protein operates within carbohydrate degradation; pentose phosphate pathway; D-ribose 5-phosphate from D-ribulose 5-phosphate (non-oxidative stage): step 1/1. Catalyzes the reversible conversion of ribose-5-phosphate to ribulose 5-phosphate. The polypeptide is Ribose-5-phosphate isomerase A (Pseudomonas aeruginosa (strain LESB58)).